A 1068-amino-acid chain; its full sequence is tRNA wybutosine-synthesizing protein 4 (1068 aa).

Positions 1–31 are disordered; sequence MCPPEQPAKAMAPSKSNQAAKSAVPTKEEKS. Residues Arg-81, Gly-107, Asp-134, 181–182, and Glu-208 each bind S-adenosyl-L-methionine; that span reads DL. The JmjC domain occupies 876–1024; sequence ADFPSLSSDF…ALGRDVYGNR (149 aa).

This sequence belongs to the methyltransferase superfamily. LCMT family.

It carries out the reaction 7-[(3S)-3-amino-3-carboxypropyl]wyosine(37) in tRNA(Phe) + S-adenosyl-L-methionine = 7-[(3S)-(3-amino-3-methoxycarbonyl)propyl]wyosine(37) in tRNA(Phe) + S-adenosyl-L-homocysteine. The enzyme catalyses 7-[(3S)-(3-amino-3-methoxycarbonyl)propyl]wyosine(37) in tRNA(Phe) + S-adenosyl-L-methionine + CO2 = wybutosine(37) in tRNA(Phe) + S-adenosyl-L-homocysteine + 2 H(+). It functions in the pathway tRNA modification; wybutosine-tRNA(Phe) biosynthesis. Its function is as follows. Probable S-adenosyl-L-methionine-dependent methyltransferase that acts as a component of the wybutosine biosynthesis pathway. Wybutosine is a hyper modified guanosine with a tricyclic base found at the 3'-position adjacent to the anticodon of eukaryotic phenylalanine tRNA. May methylate the carboxyl group of leucine residues to form alpha-leucine ester residues. The chain is tRNA wybutosine-synthesizing protein 4 (ppm2) from Emericella nidulans (strain FGSC A4 / ATCC 38163 / CBS 112.46 / NRRL 194 / M139) (Aspergillus nidulans).